The sequence spans 766 residues: Single-minded homolog 1 (766 aa).

Residues 1–53 form the bHLH domain; the sequence is MKEKSKNAARTRREKENSEFYELAKLLPLPSAITSQLDKASIIRLTTSYLKMR. PAS domains follow at residues 77–147 and 218–288; these read GREL…QPYH and PPSA…LVKG. A PAC domain is found at 292–335; the sequence is TKYYRFLAKHGGWVWVQSYATIVHNSRSSRPHCIVSVNYVLTDT. Residues 336–766 form the Single-minded C-terminal domain; sequence EYKGLQLSLD…GTSVIITNGS (431 aa). Over residues 353–365 the composition is skewed to polar residues; it reads AFSYTSSSTPTMT. 2 disordered regions span residues 353–431 and 528–563; these read AFSY…SQHD and WDED…EPSK. Residues 368 to 387 carry the Nuclear localization signal motif; that stretch reads RKGAKSRLSSSKSKSRTSPY. Residues 373–385 are compositionally biased toward low complexity; that stretch reads SRLSSSKSKSRTS. Positions 394-404 are enriched in basic and acidic residues; that stretch reads HTERSESDHDS.

As to quaternary structure, efficient DNA binding requires dimerization with another bHLH protein. Heterodimer; forms a heterodimer with ARNT, ARNT2.

The protein resides in the nucleus. Its function is as follows. Transcriptional factor that may have pleiotropic effects during embryogenesis and in the adult. This Homo sapiens (Human) protein is Single-minded homolog 1 (SIM1).